A 1693-amino-acid polypeptide reads, in one-letter code: Serine protease filzig (1693 aa).

Residues 1 to 47 are Cytoplasmic-facing; that stretch reads MFKWVTPASTATLSRCTLPATTAATTTTTAMAATRTATTTTRTTRPQ. Residues 48–68 traverse the membrane as a helical; Signal-anchor for type II membrane protein segment; it reads LLSIALTSLIIIVASFVPTTS. At 69–1693 the chain is on the extracellular side; the sequence is GFRSIETNGG…PWLRSITGVK (1625 aa). Disordered regions lie at residues 170-198, 212-321, 352-465, and 477-524; these read QQSA…QQPS, QQLD…NDDF, GLQD…THPG, and STGY…TTVS. 2 stretches are compositionally biased toward polar residues: residues 178–198 and 212–222; these read FESY…QQPS and QQLDSSSSISP. Low complexity-rich tracts occupy residues 230-241 and 252-268; these read EPQQQEYQSESE and TSSS…SSAS. Positions 274-294 are enriched in polar residues; it reads EPSQPADASNDQTTQKINKQP. Low complexity-rich tracts occupy residues 358-404, 422-431, and 488-501; these read SSES…PTQK, QQKPQQVAKP, and EPPK…PAEQ. Residues 502–524 show a composition bias toward polar residues; the sequence is SYISSSTSAKRPTTGHNSPTTVS. Residues Asn541 and Asn582 are each glycosylated (N-linked (GlcNAc...) asparagine). 3 disordered regions span residues 615-635, 752-1007, and 1057-1090; these read QDAS…PGYG, HYNP…PPAT, and YAHR…TVLI. A compositionally biased stretch (polar residues) spans 771–799; the sequence is SVSSHTTKVQEQMDETSNGYQQSETTSGY. The span at 836–847 shows a compositional bias: basic residues; the sequence is PRPKPSTKRPAV. 2 stretches are compositionally biased toward polar residues: residues 951–962 and 989–1000; these read QYDQPSAPSASY and KPISTSYVTGPS. Residues Asn1215 and Asn1272 are each glycosylated (N-linked (GlcNAc...) asparagine). Composition is skewed to low complexity over residues 1297–1307, 1331–1353, and 1362–1376; these read PVRTATTTRPK, TTTR…TTRR, and RVSS…SSAR. Positions 1297–1435 are disordered; the sequence is PVRTATTTRP…TPNLAFHSPS (139 aa). Residues 1380-1391 are compositionally biased toward acidic residues; that stretch reads DEIVDEEDEEDV. Residues 1449-1691 form the Peptidase S1 domain; the sequence is IVGGKGSTFG…YKPWLRSITG (243 aa). Cys1480 and Cys1496 are joined by a disulfide. Active-site charge relay system residues include His1495 and Asp1544. Disulfide bonds link Cys1608/Cys1627 and Cys1638/Cys1667. The active-site Charge relay system is Ser1642.

It belongs to the peptidase S1 family.

It localises to the cell membrane. Functionally, probable endopeptidase. In tracheal terminal cells, acts downstream of ich to regulate seamless tube growth and/or maintenance probably by processing lumenal matrix proteins. This chain is Serine protease filzig, found in Drosophila melanogaster (Fruit fly).